Consider the following 1057-residue polypeptide: Carbamoyl phosphate synthase large chain (1057 aa).

Residues 1 to 401 form a carboxyphosphate synthetic domain region; sequence MPKNKDINTI…SLLKAIRSLE (401 aa). Positions 129, 169, 175, 176, 208, 210, 215, 241, 242, 243, 284, and 298 each coordinate ATP. The region spanning 133–327 is the ATP-grasp 1 domain; the sequence is RSLMNELDVP…IAKLAAKIAV (195 aa). Residues Gln284, Glu298, and Asn300 each coordinate Mg(2+). Mn(2+) contacts are provided by Gln284, Glu298, and Asn300. The interval 402 to 546 is oligomerization domain; sequence YGVHHLGLPN…YGTYERDNES (145 aa). Residues 547–929 form a carbamoyl phosphate synthetic domain region; the sequence is VVTDKEKVIV…ALFKGLTASG (383 aa). Positions 671-861 constitute an ATP-grasp 2 domain; the sequence is EALLNKIDVP…MAQLAMRAIL (191 aa). ATP-binding residues include Arg707, Arg746, Leu748, Glu752, Gly777, Val778, His779, Ser780, Gln820, and Glu832. The Mg(2+) site is built by Gln820, Glu832, and Asn834. Mn(2+) is bound by residues Gln820, Glu832, and Asn834. The MGS-like domain maps to 930 to 1057; it reads VEVKDHGTVL…ESMSFTMKQM (128 aa). Residues 930–1057 form an allosteric domain region; the sequence is VEVKDHGTVL…ESMSFTMKQM (128 aa).

It belongs to the CarB family. As to quaternary structure, composed of two chains; the small (or glutamine) chain promotes the hydrolysis of glutamine to ammonia, which is used by the large (or ammonia) chain to synthesize carbamoyl phosphate. Tetramer of heterodimers (alpha,beta)4. Mg(2+) serves as cofactor. The cofactor is Mn(2+).

The enzyme catalyses hydrogencarbonate + L-glutamine + 2 ATP + H2O = carbamoyl phosphate + L-glutamate + 2 ADP + phosphate + 2 H(+). It carries out the reaction hydrogencarbonate + NH4(+) + 2 ATP = carbamoyl phosphate + 2 ADP + phosphate + 2 H(+). It participates in amino-acid biosynthesis; L-arginine biosynthesis; carbamoyl phosphate from bicarbonate: step 1/1. Its pathway is pyrimidine metabolism; UMP biosynthesis via de novo pathway; (S)-dihydroorotate from bicarbonate: step 1/3. Large subunit of the glutamine-dependent carbamoyl phosphate synthetase (CPSase). CPSase catalyzes the formation of carbamoyl phosphate from the ammonia moiety of glutamine, carbonate, and phosphate donated by ATP, constituting the first step of 2 biosynthetic pathways, one leading to arginine and/or urea and the other to pyrimidine nucleotides. The large subunit (synthetase) binds the substrates ammonia (free or transferred from glutamine from the small subunit), hydrogencarbonate and ATP and carries out an ATP-coupled ligase reaction, activating hydrogencarbonate by forming carboxy phosphate which reacts with ammonia to form carbamoyl phosphate. The protein is Carbamoyl phosphate synthase large chain of Staphylococcus carnosus (strain TM300).